The sequence spans 96 residues: Salivary protein FS50 (96 aa).

The signal sequence occupies residues 1–19 (MKWILVLALVCLAVEYSYS). 4 cysteine pairs are disulfide-bonded: Cys26/Cys71, Cys50/Cys78, Cys63/Cys91, and Cys67/Cys93.

It localises to the secreted. Its function is as follows. Salivary protein that inhibits host voltage-gated sodium channel Nav1.5/SCN5A. In Xenopsylla cheopis (Oriental rat flea), this protein is Salivary protein FS50.